Consider the following 597-residue polypeptide: Arginine--tRNA ligase (597 aa).

Positions 138–148 (ANPTGPMHVGH) match the 'HIGH' region motif.

The protein belongs to the class-I aminoacyl-tRNA synthetase family. Monomer.

It is found in the cytoplasm. It catalyses the reaction tRNA(Arg) + L-arginine + ATP = L-arginyl-tRNA(Arg) + AMP + diphosphate. The protein is Arginine--tRNA ligase of Nitrobacter winogradskyi (strain ATCC 25391 / DSM 10237 / CIP 104748 / NCIMB 11846 / Nb-255).